A 105-amino-acid polypeptide reads, in one-letter code: Pyrimidine/purine nucleoside phosphorylase (105 aa).

The protein belongs to the nucleoside phosphorylase PpnP family.

It catalyses the reaction a purine D-ribonucleoside + phosphate = a purine nucleobase + alpha-D-ribose 1-phosphate. It carries out the reaction adenosine + phosphate = alpha-D-ribose 1-phosphate + adenine. The enzyme catalyses cytidine + phosphate = cytosine + alpha-D-ribose 1-phosphate. The catalysed reaction is guanosine + phosphate = alpha-D-ribose 1-phosphate + guanine. It catalyses the reaction inosine + phosphate = alpha-D-ribose 1-phosphate + hypoxanthine. It carries out the reaction thymidine + phosphate = 2-deoxy-alpha-D-ribose 1-phosphate + thymine. The enzyme catalyses uridine + phosphate = alpha-D-ribose 1-phosphate + uracil. The catalysed reaction is xanthosine + phosphate = alpha-D-ribose 1-phosphate + xanthine. Its function is as follows. Catalyzes the phosphorolysis of diverse nucleosides, yielding D-ribose 1-phosphate and the respective free bases. Can use uridine, adenosine, guanosine, cytidine, thymidine, inosine and xanthosine as substrates. Also catalyzes the reverse reactions. The polypeptide is Pyrimidine/purine nucleoside phosphorylase (Albidiferax ferrireducens (strain ATCC BAA-621 / DSM 15236 / T118) (Rhodoferax ferrireducens)).